We begin with the raw amino-acid sequence, 417 residues long: Queuine tRNA-ribosyltransferase accessory subunit 2 (417 aa).

Zn(2+) is bound by residues C324, C326, C329, and H355.

This sequence belongs to the queuine tRNA-ribosyltransferase family. QTRT2 subfamily. In terms of assembly, heterodimer of a catalytic subunit and an accessory subunit. Requires Zn(2+) as cofactor.

The protein localises to the cytoplasm. Functionally, non-catalytic subunit of the queuine tRNA-ribosyltransferase (TGT) that catalyzes the base-exchange of a guanine (G) residue with queuine (Q) at position 34 (anticodon wobble position) in tRNAs with GU(N) anticodons (tRNA-Asp, -Asn, -His and -Tyr), resulting in the hypermodified nucleoside queuosine (7-(((4,5-cis-dihydroxy-2-cyclopenten-1-yl)amino)methyl)-7-deazaguanosine). This Drosophila persimilis (Fruit fly) protein is Queuine tRNA-ribosyltransferase accessory subunit 2.